Reading from the N-terminus, the 212-residue chain is Peptide methionine sulfoxide reductase MsrA (212 aa).

Residue cysteine 52 is part of the active site.

It belongs to the MsrA Met sulfoxide reductase family.

It carries out the reaction L-methionyl-[protein] + [thioredoxin]-disulfide + H2O = L-methionyl-(S)-S-oxide-[protein] + [thioredoxin]-dithiol. It catalyses the reaction [thioredoxin]-disulfide + L-methionine + H2O = L-methionine (S)-S-oxide + [thioredoxin]-dithiol. Its function is as follows. Has an important function as a repair enzyme for proteins that have been inactivated by oxidation. Catalyzes the reversible oxidation-reduction of methionine sulfoxide in proteins to methionine. The sequence is that of Peptide methionine sulfoxide reductase MsrA from Yersinia enterocolitica serotype O:8 / biotype 1B (strain NCTC 13174 / 8081).